A 139-amino-acid polypeptide reads, in one-letter code: Proline-rich nuclear receptor coactivator 2 (139 aa).

Disordered stretches follow at residues 1 to 51 (MGGG…GYNS), 61 to 80 (NGGK…SLSG), and 89 to 110 (ANQN…LPKP). Composition is skewed to polar residues over residues 11 to 36 (APQS…NSQM) and 61 to 79 (NGGK…SSLS). The short motif at 99–105 (SEPPSPS) is the SH3-binding element. Over residues 101–110 (PPSPSVLPKP) the composition is skewed to pro residues.

This sequence belongs to the PNRC family. PNRC2 subfamily. As to quaternary structure, interacts with UPF1/RENT1; preferentially interacts with hyperphosphorylated form. Interacts with DCP1A. Interacts with many nuclear receptors including ESR1, ESRRA, ESRRG, NR3C1/GR, NR5A1, PGR, TR, RAR and RXR. As to expression, expressed in heart, lung, muscle and brain.

The protein localises to the nucleus. It localises to the cytoplasm. Its subcellular location is the P-body. Functionally, involved in nonsense-mediated mRNA decay (NMD) by acting as a bridge between the mRNA decapping complex and the NMD machinery. May act by targeting the NMD machinery to the P-body and recruiting the decapping machinery to aberrant mRNAs. Required for UPF1/RENT1 localization to the P-body. Plays a role in glucocorticoid receptor-mediated mRNA degradation by interacting with the glucocorticoid receptor NR3C1 in a ligand-dependent manner when it is bound to the 5' UTR of target mRNAs and recruiting the RNA helicase UPF1 and the mRNA-decapping enzyme DCP1A, leading to RNA decay. Also acts as a nuclear receptor coactivator. May play a role in controlling the energy balance between energy storage and energy expenditure. The polypeptide is Proline-rich nuclear receptor coactivator 2 (PNRC2) (Homo sapiens (Human)).